The chain runs to 430 residues: Putative aspergillopepsin A-like aspartic endopeptidase MCYG_07979 (430 aa).

The signal sequence occupies residues 1 to 17 (MHLSSLLVAVLLPLALS). The propeptide at 18-87 (KPTPRKKPGS…SKIAGGAPGA (70 aa)) is activation peptide. Residues 59-105 (STQGMDGYRPEPISRFQGNSKIAGGAPGAKDDGKDEKGEVENNPTSH) form a disordered region. Over residues 87-98 (AKDDGKDEKGEV) the composition is skewed to basic and acidic residues. Positions 109-427 (FLSPVTIGGQ…DYRGPSVSLA (319 aa)) constitute a Peptidase A1 domain. Residue Asp-125 is part of the active site. Asn-306 carries an N-linked (GlcNAc...) asparagine glycan. Asp-314 is an active-site residue. The N-linked (GlcNAc...) asparagine glycan is linked to Asn-352.

The protein belongs to the peptidase A1 family.

Its subcellular location is the secreted. This chain is Putative aspergillopepsin A-like aspartic endopeptidase MCYG_07979, found in Arthroderma otae (strain ATCC MYA-4605 / CBS 113480) (Microsporum canis).